Reading from the N-terminus, the 355-residue chain is Phytoene synthase (355 aa).

This sequence belongs to the phytoene/squalene synthase family. Requires ATP as cofactor. The cofactor is Mn(2+). Mg(2+) serves as cofactor.

Its pathway is carotenoid biosynthesis; phytoene biosynthesis. In terms of biological role, involved in the biosynthesis of carotenoids. Catalyzes the condensation of two molecules of geranylgeranyl diphosphate (GGPP) to give prephytoene diphosphate (PPPP) and the subsequent rearrangement of the cyclopropylcarbinyl intermediate to yield phytoene. The chain is Phytoene synthase (crtB) from Cereibacter sphaeroides (strain ATCC 17023 / DSM 158 / JCM 6121 / CCUG 31486 / LMG 2827 / NBRC 12203 / NCIMB 8253 / ATH 2.4.1.) (Rhodobacter sphaeroides).